The primary structure comprises 336 residues: Glucokinase (336 aa).

Residue 12–17 participates in ATP binding; the sequence is ADIGGT.

This sequence belongs to the bacterial glucokinase family.

It localises to the cytoplasm. It carries out the reaction D-glucose + ATP = D-glucose 6-phosphate + ADP + H(+). This Helicobacter pylori (strain J99 / ATCC 700824) (Campylobacter pylori J99) protein is Glucokinase.